The chain runs to 248 residues: Putative eukaryotic initiation factor 4A-like protein (248 aa).

A Q motif motif is present at residues 14–42 (VGFASLGLNEQLINNIKRYGITKLTPFQM). The 195-residue stretch at 45-239 (IKEIKENSNV…NTFIKIPKII (195 aa)) folds into the Helicase ATP-binding domain. Residue 58 to 65 (SIEGTGRT) coordinates ATP. The short motif at 185–188 (DELD) is the DEAD box element.

The protein belongs to the DEAD box helicase family. eIF4A subfamily.

This chain is Putative eukaryotic initiation factor 4A-like protein, found in Dictyostelium discoideum (Social amoeba).